The following is a 377-amino-acid chain: 2-iminoacetate synthase (377 aa).

Positions 71 to 301 constitute a Radical SAM core domain; it reads NTVSFYVPLY…PEIELSLSTR (231 aa). [4Fe-4S] cluster is bound by residues C85, C89, and C92.

It belongs to the radical SAM superfamily. ThiH family. In terms of assembly, forms a heterodimer with ThiG. It depends on [4Fe-4S] cluster as a cofactor.

The catalysed reaction is L-tyrosine + S-adenosyl-L-methionine + NADPH = 2-iminoacetate + 4-methylphenol + 5'-deoxyadenosine + L-methionine + NADP(+). Its pathway is cofactor biosynthesis; thiamine diphosphate biosynthesis. Its function is as follows. Catalyzes the radical-mediated cleavage of tyrosine to 2-iminoacetate and 4-cresol. The sequence is that of 2-iminoacetate synthase (thiH) from Escherichia coli (strain K12).